Reading from the N-terminus, the 222-residue chain is uncharacterized protein (222 aa).

This is an uncharacterized protein from Acanthamoeba polyphaga mimivirus (APMV).